The chain runs to 98 residues: Small ribosomal subunit protein uS19 (98 aa).

The interval threonine 77 to lysine 98 is disordered.

This sequence belongs to the universal ribosomal protein uS19 family.

Functionally, protein S19 forms a complex with S13 that binds strongly to the 16S ribosomal RNA. The sequence is that of Small ribosomal subunit protein uS19 from Chlorobium phaeovibrioides (strain DSM 265 / 1930) (Prosthecochloris vibrioformis (strain DSM 265)).